The chain runs to 1033 residues: Isoleucine--tRNA ligase 2 (1033 aa).

The 'HIGH' region motif lies at 47–57; that stretch reads PTANGLPHVGH. The 'KMSKS' region signature appears at 590–594; the sequence is KMSKS. Lys-593 contributes to the ATP binding site.

It belongs to the class-I aminoacyl-tRNA synthetase family. IleS type 2 subfamily. In terms of assembly, monomer. Zn(2+) is required as a cofactor.

It localises to the cytoplasm. It catalyses the reaction tRNA(Ile) + L-isoleucine + ATP = L-isoleucyl-tRNA(Ile) + AMP + diphosphate. Catalyzes the attachment of isoleucine to tRNA(Ile). As IleRS can inadvertently accommodate and process structurally similar amino acids such as valine, to avoid such errors it has two additional distinct tRNA(Ile)-dependent editing activities. One activity is designated as 'pretransfer' editing and involves the hydrolysis of activated Val-AMP. The other activity is designated 'posttransfer' editing and involves deacylation of mischarged Val-tRNA(Ile). In Bacillus thuringiensis subsp. konkukian (strain 97-27), this protein is Isoleucine--tRNA ligase 2.